A 300-amino-acid polypeptide reads, in one-letter code: 1D-myo-inositol 2-acetamido-2-deoxy-alpha-D-glucopyranoside deacetylase (300 aa).

Zn(2+) is bound by residues H13, D16, and H147.

The protein belongs to the MshB deacetylase family. The cofactor is Zn(2+).

The enzyme catalyses 1D-myo-inositol 2-acetamido-2-deoxy-alpha-D-glucopyranoside + H2O = 1D-myo-inositol 2-amino-2-deoxy-alpha-D-glucopyranoside + acetate. In terms of biological role, catalyzes the deacetylation of 1D-myo-inositol 2-acetamido-2-deoxy-alpha-D-glucopyranoside (GlcNAc-Ins) in the mycothiol biosynthesis pathway. The polypeptide is 1D-myo-inositol 2-acetamido-2-deoxy-alpha-D-glucopyranoside deacetylase (Mycolicibacterium paratuberculosis (strain ATCC BAA-968 / K-10) (Mycobacterium paratuberculosis)).